Reading from the N-terminus, the 260-residue chain is Isopentenyl phosphate kinase (260 aa).

6–10 contributes to the ATP binding site; sequence KLGGS. Position 55 (G55) interacts with substrate. G56 lines the ATP pocket. Residues H60 and G159 each coordinate substrate. Residues D180, G217, and K221 each contribute to the ATP site.

This sequence belongs to the isopentenyl phosphate kinase family. In terms of assembly, homodimer.

It carries out the reaction isopentenyl phosphate + ATP = isopentenyl diphosphate + ADP. Functionally, catalyzes the formation of isopentenyl diphosphate (IPP), the building block of all isoprenoids. Has no activity with farnesyl phosphate. The protein is Isopentenyl phosphate kinase of Methanocaldococcus jannaschii (strain ATCC 43067 / DSM 2661 / JAL-1 / JCM 10045 / NBRC 100440) (Methanococcus jannaschii).